Reading from the N-terminus, the 142-residue chain is Large ribosomal subunit protein uL13 (142 aa).

The protein belongs to the universal ribosomal protein uL13 family. As to quaternary structure, part of the 50S ribosomal subunit.

This protein is one of the early assembly proteins of the 50S ribosomal subunit, although it is not seen to bind rRNA by itself. It is important during the early stages of 50S assembly. The protein is Large ribosomal subunit protein uL13 of Citrifermentans bemidjiense (strain ATCC BAA-1014 / DSM 16622 / JCM 12645 / Bem) (Geobacter bemidjiensis).